The primary structure comprises 293 residues: tRNA pseudouridine synthase B (293 aa).

Aspartate 40 serves as the catalytic Nucleophile.

The protein belongs to the pseudouridine synthase TruB family. Type 1 subfamily.

It carries out the reaction uridine(55) in tRNA = pseudouridine(55) in tRNA. In terms of biological role, responsible for synthesis of pseudouridine from uracil-55 in the psi GC loop of transfer RNAs. The protein is tRNA pseudouridine synthase B of Rickettsia akari (strain Hartford).